Reading from the N-terminus, the 141-residue chain is Hemoglobin subunit alpha-A (141 aa).

In terms of domain architecture, Globin spans 1–141 (VLSASDKANV…VGTVLTAKYR (141 aa)). His58 serves as a coordination point for O2. His87 serves as a coordination point for heme b.

The protein belongs to the globin family. As to quaternary structure, heterotetramer of two alpha chains and two beta chains. As to expression, red blood cells.

Functionally, involved in oxygen transport from the lung to the various peripheral tissues. In Sturnus vulgaris (Starling), this protein is Hemoglobin subunit alpha-A (HBAA).